The primary structure comprises 214 residues: MNLFLDTANIDEIKKVHELGLLDGITTNPSIIAKSGRKFTEVIKEICSFVKGPVSAEVLATDAPTMIKEGLELSKIAENVVVKVPLIPEGMKAVKAFAEQGIQTNVTLCFTANQALLAAKAGATFISPFVGRLDDVGYDGLELISEIREIYDNYGIETQILAASVRHPIHFKEVALRGADCVTLPYSVFEMLFKHPLTDSGLAKFVEDSKKLNW.

K83 serves as the catalytic Schiff-base intermediate with substrate.

This sequence belongs to the transaldolase family. Type 3B subfamily.

The protein resides in the cytoplasm. It catalyses the reaction D-sedoheptulose 7-phosphate + D-glyceraldehyde 3-phosphate = D-erythrose 4-phosphate + beta-D-fructose 6-phosphate. The protein operates within carbohydrate degradation; pentose phosphate pathway; D-glyceraldehyde 3-phosphate and beta-D-fructose 6-phosphate from D-ribose 5-phosphate and D-xylulose 5-phosphate (non-oxidative stage): step 2/3. Its function is as follows. Transaldolase is important for the balance of metabolites in the pentose-phosphate pathway. In Leptospira biflexa serovar Patoc (strain Patoc 1 / Ames), this protein is Probable transaldolase.